The sequence spans 152 residues: Small ribosomal subunit protein uS11A (152 aa).

A disordered region spans residues 131 to 152 (EDVTPIPSDSTRRKGGRRGRRL). Residues 143–152 (RKGGRRGRRL) are compositionally biased toward basic residues.

The protein belongs to the universal ribosomal protein uS11 family.

The chain is Small ribosomal subunit protein uS11A from Anopheles gambiae (African malaria mosquito).